Reading from the N-terminus, the 504-residue chain is Ribose import ATP-binding protein RbsA (504 aa).

2 ABC transporter domains span residues L6 to R242 and V252 to T495. G38–S45 lines the ATP pocket.

The protein belongs to the ABC transporter superfamily. Ribose importer (TC 3.A.1.2.1) family. In terms of assembly, the complex is composed of an ATP-binding protein (RbsA), two transmembrane proteins (RbsC) and a solute-binding protein (RbsB).

The protein localises to the cell inner membrane. It carries out the reaction D-ribose(out) + ATP + H2O = D-ribose(in) + ADP + phosphate + H(+). Part of the ABC transporter complex RbsABC involved in ribose import. Responsible for energy coupling to the transport system. In Photobacterium profundum (strain SS9), this protein is Ribose import ATP-binding protein RbsA.